The chain runs to 137 residues: Large ribosomal subunit protein uL16 (137 aa).

The protein belongs to the universal ribosomal protein uL16 family. As to quaternary structure, part of the 50S ribosomal subunit.

In terms of biological role, binds 23S rRNA and is also seen to make contacts with the A and possibly P site tRNAs. In Nitrobacter winogradskyi (strain ATCC 25391 / DSM 10237 / CIP 104748 / NCIMB 11846 / Nb-255), this protein is Large ribosomal subunit protein uL16.